The following is a 240-amino-acid chain: MTSTLKAEVDLHVHSLASGHAYSTINEIAAEAARRGLRGVAMTDHGPNMPAAPHPYHFECLYMIPDHLCGVRIFKGAETNIIGPGQVDLEDRLLEKMDLVLAGFHRHCGYGPSELQANTRAVLELMENPRIHIICHPGNPEYPLDYEAVARQAAATGTALELNNSSFVTSRVGSADNCRLIAKLCARFHSPVSLGSDAHIAQSVASFGHALDALNAAGIAPEQIVNRTLETTLDFLGMNT.

9 residues coordinate Zn(2+): His-12, His-14, His-20, His-45, Glu-78, His-105, His-136, Asp-197, and His-199.

The protein belongs to the PHP family. Zn(2+) is required as a cofactor.

The chain is Probable phosphatase Pcar_2586 from Syntrophotalea carbinolica (strain DSM 2380 / NBRC 103641 / GraBd1) (Pelobacter carbinolicus).